The chain runs to 413 residues: Serine hydroxymethyltransferase (413 aa).

(6S)-5,6,7,8-tetrahydrofolate-binding positions include Leu-117 and 121–123 (GHL). An N6-(pyridoxal phosphate)lysine modification is found at Lys-226. Residues Glu-239 and 349–351 (SPF) each bind (6S)-5,6,7,8-tetrahydrofolate.

The protein belongs to the SHMT family. Homodimer. Pyridoxal 5'-phosphate is required as a cofactor.

The protein resides in the cytoplasm. It carries out the reaction (6R)-5,10-methylene-5,6,7,8-tetrahydrofolate + glycine + H2O = (6S)-5,6,7,8-tetrahydrofolate + L-serine. Its pathway is one-carbon metabolism; tetrahydrofolate interconversion. It participates in amino-acid biosynthesis; glycine biosynthesis; glycine from L-serine: step 1/1. Catalyzes the reversible interconversion of serine and glycine with tetrahydrofolate (THF) serving as the one-carbon carrier. This reaction serves as the major source of one-carbon groups required for the biosynthesis of purines, thymidylate, methionine, and other important biomolecules. Also exhibits THF-independent aldolase activity toward beta-hydroxyamino acids, producing glycine and aldehydes, via a retro-aldol mechanism. The sequence is that of Serine hydroxymethyltransferase from Bacillus cereus (strain ATCC 10987 / NRS 248).